We begin with the raw amino-acid sequence, 344 residues long: Aspartate carbamoyltransferase catalytic subunit (344 aa).

A disordered region spans residues 1-30 (MPESPPLPKRSPLMTSSTTRPASDYPPGGD). Carbamoyl phosphate is bound by residues Arg-88 and Thr-89. Lys-116 serves as a coordination point for L-aspartate. Carbamoyl phosphate-binding residues include Arg-138, His-166, and Gln-169. Positions 199 and 253 each coordinate L-aspartate. Carbamoyl phosphate-binding residues include Gly-294 and Pro-295.

It belongs to the aspartate/ornithine carbamoyltransferase superfamily. ATCase family. Heterododecamer (2C3:3R2) of six catalytic PyrB chains organized as two trimers (C3), and six regulatory PyrI chains organized as three dimers (R2).

It carries out the reaction carbamoyl phosphate + L-aspartate = N-carbamoyl-L-aspartate + phosphate + H(+). It participates in pyrimidine metabolism; UMP biosynthesis via de novo pathway; (S)-dihydroorotate from bicarbonate: step 2/3. Catalyzes the condensation of carbamoyl phosphate and aspartate to form carbamoyl aspartate and inorganic phosphate, the committed step in the de novo pyrimidine nucleotide biosynthesis pathway. In Sphingopyxis alaskensis (strain DSM 13593 / LMG 18877 / RB2256) (Sphingomonas alaskensis), this protein is Aspartate carbamoyltransferase catalytic subunit.